We begin with the raw amino-acid sequence, 103 residues long: uncharacterized protein (103 aa).

Residues 1–21 (MTGFKVSSFFYILALSRFFNA) form the signal peptide.

This is an uncharacterized protein from Saccharomyces cerevisiae (strain ATCC 204508 / S288c) (Baker's yeast).